The primary structure comprises 366 residues: Chorismate synthase (366 aa).

Residues Arg48 and Arg54 each coordinate NADP(+). FMN is bound by residues 125-127, 238-239, Gly278, 293-297, and Arg319; these read RSS, NA, and KPTSS.

The protein belongs to the chorismate synthase family. As to quaternary structure, homotetramer. The cofactor is FMNH2.

It carries out the reaction 5-O-(1-carboxyvinyl)-3-phosphoshikimate = chorismate + phosphate. The protein operates within metabolic intermediate biosynthesis; chorismate biosynthesis; chorismate from D-erythrose 4-phosphate and phosphoenolpyruvate: step 7/7. Its function is as follows. Catalyzes the anti-1,4-elimination of the C-3 phosphate and the C-6 proR hydrogen from 5-enolpyruvylshikimate-3-phosphate (EPSP) to yield chorismate, which is the branch point compound that serves as the starting substrate for the three terminal pathways of aromatic amino acid biosynthesis. This reaction introduces a second double bond into the aromatic ring system. This is Chorismate synthase from Neisseria gonorrhoeae (strain NCCP11945).